Here is a 158-residue protein sequence, read N- to C-terminus: Transcription elongation factor GreA (158 aa).

Residues 10–76 (TLEGKKKLEE…QIEKMIRNAE (67 aa)) adopt a coiled-coil conformation.

It belongs to the GreA/GreB family.

Functionally, necessary for efficient RNA polymerase transcription elongation past template-encoded arresting sites. The arresting sites in DNA have the property of trapping a certain fraction of elongating RNA polymerases that pass through, resulting in locked ternary complexes. Cleavage of the nascent transcript by cleavage factors such as GreA or GreB allows the resumption of elongation from the new 3'terminus. GreA releases sequences of 2 to 3 nucleotides. In Halalkalibacterium halodurans (strain ATCC BAA-125 / DSM 18197 / FERM 7344 / JCM 9153 / C-125) (Bacillus halodurans), this protein is Transcription elongation factor GreA.